The following is a 319-amino-acid chain: Taste receptor type 2 member 39 (319 aa).

The Extracellular portion of the chain corresponds to 1-16 (MAQPSNYWKQDVLPLS). Residues 17 to 37 (ILMLTLVATECTIGIIASGIV) traverse the membrane as a helical segment. At 38 to 65 (MAVNAVSWVQKKAISITTRILLLLSVSR) the chain is on the cytoplasmic side. Residues 66 to 86 (IGLQSIMLIEITSSIFNVAFY) traverse the membrane as a helical segment. Topologically, residues 87–97 (NSVLYRVSNVS) are extracellular. Residue Asn95 is glycosylated (N-linked (GlcNAc...) asparagine). The helical transmembrane segment at 98 to 118 (FVFLNYCSLWFAALLSFFHFV) threads the bilayer. Over 119–137 (KIANFSYPLFFKLKWRISE) the chain is Cytoplasmic. A helical transmembrane segment spans residues 138-158 (LMPWLLWLSVFISFSSSMFFS). The Extracellular portion of the chain corresponds to 159 to 194 (KHKFTVNNNNSLSNNICNFTMKLYVVETNVVNVSFL). N-linked (GlcNAc...) asparagine glycans are attached at residues Asn167, Asn176, and Asn190. The helical transmembrane segment at 195-215 (FISGILPPLTMFVATATLLIF) threads the bilayer. Topologically, residues 216 to 247 (SLRRHTLNMRNSATGSRNPCIEAHMQAIKETS) are cytoplasmic. Residues 248-268 (CFLFLYILNAAALLLSTSNIV) traverse the membrane as a helical segment. Residues 269–273 (DASLF) are Extracellular-facing. Residues 274–294 (WSIVIRIVLPVYPAGHSVLLI) form a helical membrane-spanning segment. Topologically, residues 295-319 (QNNPGLRRTWKHLQSQIHLYLQNRF) are cytoplasmic.

It belongs to the G-protein coupled receptor T2R family.

Its subcellular location is the membrane. Functionally, putative taste receptor which may play a role in the perception of bitterness. This is Taste receptor type 2 member 39 (Tas2r39) from Mus musculus (Mouse).